A 173-amino-acid polypeptide reads, in one-letter code: Putative metal-dependent hydrolase BT9727_2476 (173 aa).

The Zn(2+) site is built by His-65, His-156, and His-160.

The protein belongs to the metal hydrolase YfiT family. Homodimer. The cofactor is Zn(2+).

The protein resides in the cytoplasm. Possible metal-dependent hydrolase. This Bacillus thuringiensis subsp. konkukian (strain 97-27) protein is Putative metal-dependent hydrolase BT9727_2476.